The following is a 29-amino-acid chain: Cyclotide cter-N (29 aa).

Positions 1-29 form a cross-link, cyclopeptide (Gly-Asn); the sequence is GSAFCGETCVLGTCYTPDCSCTALVCLKN. Intrachain disulfides connect Cys5–Cys19, Cys9–Cys21, and Cys14–Cys26.

Post-translationally, this is a cyclic peptide.

The protein localises to the secreted. Probably participates in a plant defense mechanism. The polypeptide is Cyclotide cter-N (Clitoria ternatea (Butterfly pea)).